We begin with the raw amino-acid sequence, 475 residues long: Probable proline--tRNA ligase, mitochondrial (475 aa).

A mitochondrion-targeting transit peptide spans 1 to 29 (MEGLLTRCRALPALATCSRQLSGYVPCRF).

This sequence belongs to the class-II aminoacyl-tRNA synthetase family.

Its subcellular location is the mitochondrion matrix. The enzyme catalyses tRNA(Pro) + L-proline + ATP = L-prolyl-tRNA(Pro) + AMP + diphosphate. Functionally, mitochondrial aminoacyl-tRNA synthetase that catalyzes the specific attachment of the proline amino acid (aa) to the homologous transfer RNA (tRNA), further participating in protein synthesis. The reaction occurs in a two steps: proline is first activated by ATP to form Pro-AMP and then transferred to the acceptor end of tRNA(Pro). This chain is Probable proline--tRNA ligase, mitochondrial, found in Homo sapiens (Human).